Here is a 145-residue protein sequence, read N- to C-terminus: Basic phospholipase A2 S11-61 (145 aa).

An N-terminal signal peptide occupies residues 1 to 19; it reads MYPVHLLVLLAVCVSLLGA. A propeptide spanning residues 20-27 is cleaved from the precursor; that stretch reads SNIPPQPL. 7 disulfide bridges follow: Cys38/Cys98, Cys54/Cys144, Cys56/Cys72, Cys71/Cys125, Cys78/Cys118, Cys87/Cys111, and Cys105/Cys116. Ca(2+) contacts are provided by Tyr55, Gly57, and Gly59. His75 is a catalytic residue. Asp76 contributes to the Ca(2+) binding site. Residue Asp119 is part of the active site.

It belongs to the phospholipase A2 family. Group I subfamily. D49 sub-subfamily. The cofactor is Ca(2+). In terms of tissue distribution, expressed by the venom gland.

It localises to the secreted. The catalysed reaction is a 1,2-diacyl-sn-glycero-3-phosphocholine + H2O = a 1-acyl-sn-glycero-3-phosphocholine + a fatty acid + H(+). Snake venom phospholipase A2 (PLA2) that inhibits collagen-induced platelet aggregation. PLA2 catalyzes the calcium-dependent hydrolysis of the 2-acyl groups in 3-sn-phosphoglycerides. The protein is Basic phospholipase A2 S11-61 of Austrelaps superbus (Lowland copperhead snake).